A 120-amino-acid polypeptide reads, in one-letter code: Ribonuclease P protein component (120 aa).

The protein belongs to the RnpA family. Consists of a catalytic RNA component (M1 or rnpB) and a protein subunit.

It carries out the reaction Endonucleolytic cleavage of RNA, removing 5'-extranucleotides from tRNA precursor.. In terms of biological role, RNaseP catalyzes the removal of the 5'-leader sequence from pre-tRNA to produce the mature 5'-terminus. It can also cleave other RNA substrates such as 4.5S RNA. The protein component plays an auxiliary but essential role in vivo by binding to the 5'-leader sequence and broadening the substrate specificity of the ribozyme. This chain is Ribonuclease P protein component, found in Thioalkalivibrio sulfidiphilus (strain HL-EbGR7).